The following is a 366-amino-acid chain: L-idonate 5-dehydrogenase (366 aa).

Zn(2+)-binding residues include C56, H81, C111, C114, C117, C125, and E167.

Belongs to the zinc-containing alcohol dehydrogenase family. Requires Zn(2+) as cofactor.

The catalysed reaction is L-idonate + NAD(+) = 5-dehydro-D-gluconate + NADH + H(+). Its pathway is carbohydrate acid metabolism; L-idonate degradation. Functionally, involved in the catabolism of ascorbate to tartrate. The enzyme has no activity with NADP(+). In Vitis vinifera (Grape), this protein is L-idonate 5-dehydrogenase.